The following is a 415-amino-acid chain: Secernin-2 (415 aa).

C8 is a catalytic residue.

This sequence belongs to the peptidase C69 family. Secernin subfamily.

The chain is Secernin-2 (scrn2) from Danio rerio (Zebrafish).